The primary structure comprises 375 residues: Dual-specificity RNA methyltransferase RlmN (375 aa).

Catalysis depends on Glu94, which acts as the Proton acceptor. Residues 100–339 form the Radical SAM core domain; that stretch reads EDDRATLCVS…VTVRKTRGDD (240 aa). An intrachain disulfide couples Cys107 to Cys344. [4Fe-4S] cluster-binding residues include Cys114, Cys118, and Cys121. S-adenosyl-L-methionine contacts are provided by residues 168 to 169, Ser200, 222 to 224, and Asn301; these read GE and SLH. Cys344 functions as the S-methylcysteine intermediate in the catalytic mechanism.

Belongs to the radical SAM superfamily. RlmN family. [4Fe-4S] cluster is required as a cofactor.

It is found in the cytoplasm. It carries out the reaction adenosine(2503) in 23S rRNA + 2 reduced [2Fe-2S]-[ferredoxin] + 2 S-adenosyl-L-methionine = 2-methyladenosine(2503) in 23S rRNA + 5'-deoxyadenosine + L-methionine + 2 oxidized [2Fe-2S]-[ferredoxin] + S-adenosyl-L-homocysteine. The catalysed reaction is adenosine(37) in tRNA + 2 reduced [2Fe-2S]-[ferredoxin] + 2 S-adenosyl-L-methionine = 2-methyladenosine(37) in tRNA + 5'-deoxyadenosine + L-methionine + 2 oxidized [2Fe-2S]-[ferredoxin] + S-adenosyl-L-homocysteine. In terms of biological role, specifically methylates position 2 of adenine 2503 in 23S rRNA and position 2 of adenine 37 in tRNAs. m2A2503 modification seems to play a crucial role in the proofreading step occurring at the peptidyl transferase center and thus would serve to optimize ribosomal fidelity. The chain is Dual-specificity RNA methyltransferase RlmN from Vibrio campbellii (strain ATCC BAA-1116).